We begin with the raw amino-acid sequence, 498 residues long: Putrescine N-hydroxylase (498 aa).

Residues F23, D43, K45, W50, H51, and Q62 each contribute to the FAD site. Positions 62 and 104 each coordinate NADP(+). An FAD-binding site is contributed by V127. S207, R231, Y275, and L309 together coordinate NADP(+). Positions 386, 397, and 399 each coordinate FAD. Over residues 443-474 the composition is skewed to polar residues; the sequence is LESNTHSAVTPSKTRQGLNPSAKSVQQPSIEP. Residues 443–498 are disordered; that stretch reads LESNTHSAVTPSKTRQGLNPSAKSVQQPSIEPQTALRIAPTGGNVSALMAPNKEAQ.

This sequence belongs to the lysine N(6)-hydroxylase/L-ornithine N(5)-oxygenase family. FAD is required as a cofactor.

The enzyme catalyses putrescine + NADPH + O2 = N-hydroxyputrescine + NADP(+) + H2O. It participates in siderophore biosynthesis. Its function is as follows. N-hydroxylating monooxygenase involved in the biosynthesis of the siderophore putrebactin. Catalyzes the N-hydroxylation of the aliphatic diamine putrescine into N-hydroxyputrescine (NHP). This Shewanella oneidensis (strain ATCC 700550 / JCM 31522 / CIP 106686 / LMG 19005 / NCIMB 14063 / MR-1) protein is Putrescine N-hydroxylase.